A 335-amino-acid chain; its full sequence is Phosphate acyltransferase (335 aa).

The protein belongs to the PlsX family. Homodimer. Probably interacts with PlsY.

It is found in the cytoplasm. It carries out the reaction a fatty acyl-[ACP] + phosphate = an acyl phosphate + holo-[ACP]. The protein operates within lipid metabolism; phospholipid metabolism. Its function is as follows. Catalyzes the reversible formation of acyl-phosphate (acyl-PO(4)) from acyl-[acyl-carrier-protein] (acyl-ACP). This enzyme utilizes acyl-ACP as fatty acyl donor, but not acyl-CoA. The protein is Phosphate acyltransferase of Clostridium botulinum (strain Langeland / NCTC 10281 / Type F).